A 308-amino-acid polypeptide reads, in one-letter code: 4-hydroxy-tetrahydrodipicolinate synthase (308 aa).

T56 provides a ligand contact to pyruvate. Y144 serves as the catalytic Proton donor/acceptor. Catalysis depends on K172, which acts as the Schiff-base intermediate with substrate. V212 contacts pyruvate.

Belongs to the DapA family. Homotetramer; dimer of dimers.

It localises to the cytoplasm. The catalysed reaction is L-aspartate 4-semialdehyde + pyruvate = (2S,4S)-4-hydroxy-2,3,4,5-tetrahydrodipicolinate + H2O + H(+). It participates in amino-acid biosynthesis; L-lysine biosynthesis via DAP pathway; (S)-tetrahydrodipicolinate from L-aspartate: step 3/4. Functionally, catalyzes the condensation of (S)-aspartate-beta-semialdehyde [(S)-ASA] and pyruvate to 4-hydroxy-tetrahydrodipicolinate (HTPA). This Kineococcus radiotolerans (strain ATCC BAA-149 / DSM 14245 / SRS30216) protein is 4-hydroxy-tetrahydrodipicolinate synthase.